The following is a 103-amino-acid chain: Small ribosomal subunit protein uS10 (103 aa).

This sequence belongs to the universal ribosomal protein uS10 family. In terms of assembly, part of the 30S ribosomal subunit.

In terms of biological role, involved in the binding of tRNA to the ribosomes. The polypeptide is Small ribosomal subunit protein uS10 (Vibrio cholerae serotype O1 (strain ATCC 39541 / Classical Ogawa 395 / O395)).